The sequence spans 337 residues: Heme A synthase (337 aa).

5 helical membrane-spanning segments follow: residues 6–26 (ITKW…IGGI), 93–113 (GRIT…KDVI), 118–138 (ILPY…GWYM), 154–174 (LAFH…QLIK), and 192–212 (LIFS…GAMV). His-256 lines the heme pocket. A run of 3 helical transmembrane segments spans residues 258–278 (LGGY…LKIE), 285–305 (IAYF…ITLL), and 308–328 (VPII…SIII). His-316 contacts heme.

It belongs to the COX15/CtaA family. Type 2 subfamily. As to quaternary structure, interacts with CtaB. Heme b is required as a cofactor.

It localises to the cell membrane. The enzyme catalyses Fe(II)-heme o + 2 A + H2O = Fe(II)-heme a + 2 AH2. It participates in porphyrin-containing compound metabolism; heme A biosynthesis; heme A from heme O: step 1/1. Catalyzes the conversion of heme O to heme A by two successive hydroxylations of the methyl group at C8. The first hydroxylation forms heme I, the second hydroxylation results in an unstable dihydroxymethyl group, which spontaneously dehydrates, resulting in the formyl group of heme A. The protein is Heme A synthase of Rickettsia felis (strain ATCC VR-1525 / URRWXCal2) (Rickettsia azadi).